The primary structure comprises 756 residues: Protease KEX1 (756 aa).

The N-terminal stretch at 1–24 (MILSSQLMLALIAVSGYGKAMQVP) is a signal peptide. 3 N-linked (GlcNAc...) asparagine glycosylation sites follow: Asn-121, Asn-144, and Asn-152. One can recognise a Peptidase S8 domain in the interval 130–440 (QWHLINPNYP…FGKLDAYNIV (311 aa)). Residues Asp-164 and His-202 each act as charge relay system in the active site. Disulfide bonds link Cys-218–Cys-365 and Cys-310–Cys-340. Catalysis depends on Ser-373, which acts as the Charge relay system. N-linked (GlcNAc...) asparagine glycosylation is found at Asn-392 and Asn-538. The region spanning 449–583 (VNPQGWLYLP…RLKMFGETID (135 aa)) is the P/Homo B domain. Residues 599-632 (AEVKSTESKTTTPTAQTSSFTTTSGEETSGANKL) form a disordered region. Positions 606-628 (SKTTTPTAQTSSFTTTSGEETSG) are enriched in low complexity. Residues 641-661 (LYLAIFVIGAIVIIIYYLFFL) traverse the membrane as a helical segment. The tract at residues 715–756 (EEELSPRESSSNNPFGNESLESFDNSPDHTSNLLGQNSIPNK) is disordered. The segment covering 721–756 (RESSSNNPFGNESLESFDNSPDHTSNLLGQNSIPNK) has biased composition (polar residues).

This sequence belongs to the peptidase S8 family. Furin subfamily. Requires Ca(2+) as cofactor.

Its subcellular location is the membrane. Functionally, probably involved in the processing of the precursor of m1-toxin and alpha-factor. The chain is Protease KEX1 (KEX1) from Kluyveromyces lactis (strain ATCC 8585 / CBS 2359 / DSM 70799 / NBRC 1267 / NRRL Y-1140 / WM37) (Yeast).